Here is a 137-residue protein sequence, read N- to C-terminus: Cellular retinoic acid-binding protein 1 (137 aa).

The short motif at lysine 21–lysine 31 is the Nuclear localization signal element. Arginine 132 to tyrosine 134 serves as a coordination point for all-trans-retinoate.

Belongs to the calycin superfamily. Fatty-acid binding protein (FABP) family.

Its subcellular location is the cytoplasm. In terms of biological role, cytosolic CRABPs may regulate the access of retinoic acid to the nuclear retinoic acid receptors. This is Cellular retinoic acid-binding protein 1 (CRABP1) from Gallus gallus (Chicken).